Reading from the N-terminus, the 1163-residue chain is AF4/FMR2 family member 4 (1163 aa).

Residues 1–19 (MNREDRNVLRMKERERRNQ) are compositionally biased toward basic and acidic residues. Disordered regions lie at residues 1 to 48 (MNRE…EDKL), 76 to 312 (AIPK…ASGD), 324 to 904 (THSW…PRRT), and 1034 to 1073 (NSYN…SSGA). Residues 115-128 (PSTSQSQKRSSGLQ) show a composition bias toward polar residues. Ser120 is modified (phosphoserine). Low complexity-rich tracts occupy residues 129–148 (SGHS…NSSG) and 177–194 (RSSS…NSSH). Residues 198–217 (HGNDHHSKEHQRSKSPRDPD) show a composition bias toward basic and acidic residues. Phosphoserine is present on Ser212. Polar residues-rich tracts occupy residues 227 to 251 (PFSS…SMLQ), 273 to 285 (EHYS…NSMT), and 350 to 375 (KESQ…NGHQ). Phosphoserine occurs at positions 387, 388, 389, and 392. The segment covering 403 to 412 (PRSTPGSNSE) has biased composition (polar residues). The segment covering 413-429 (PSHHNSEGADNSRDDSS) has biased composition (basic and acidic residues). Over residues 430 to 462 (SHSGSESSSGSDSESESSSSDSEANEPSQSASP) the composition is skewed to low complexity. Phosphoserine occurs at positions 487, 490, and 491. Composition is skewed to polar residues over residues 488 to 501 (PASS…SSQG), 510 to 528 (GTGN…SSAT), and 549 to 560 (SPAQSDSTTQRR). Ser549 is subject to Phosphoserine. Positions 568–586 (KKAEKAAAEEPRGGLKIES) are enriched in basic and acidic residues. Residue Lys583 forms a Glycyl lysine isopeptide (Lys-Gly) (interchain with G-Cter in SUMO2) linkage. The span at 599 to 612 (SRHKAATKGSRKPN) shows a compositional bias: basic residues. Over residues 613–627 (IKKESKSSPRPTAEK) the composition is skewed to basic and acidic residues. Ser671 bears the Phosphoserine mark. Position 674 is a phosphothreonine (Thr674). Phosphoserine occurs at positions 680, 694, 703, and 706. Tyr712 is subject to Phosphotyrosine. Basic and acidic residues-rich tracts occupy residues 730–761 (PYKE…EKVS), 769–789 (KNED…DKNS), and 799–811 (ESSK…EKDL). The residue at position 814 (Ser814) is a Phosphoserine. N6-acetyllysine is present on Lys822. A phosphoserine mark is found at Ser836, Ser1043, Ser1055, Ser1058, and Ser1062. Over residues 836–862 (SQSSSLKSSSNSNKETSGSSKNSSSTS) the composition is skewed to low complexity. Positions 1062–1073 (SPGNSGNYSSGA) are enriched in low complexity.

This sequence belongs to the AF4 family. Component of the super elongation complex (SEC), at least composed of EAF1, EAF2, CDK9, MLLT3/AF9, AFF (AFF1 or AFF4), the P-TEFb complex and ELL (ELL, ELL2 or ELL3). Interacts with ELL3; the interaction is direct. Interacts with ELL2; the interaction is direct and leads to stabilize ELL2 and prevent ELL2 ubiquitination and degradation. Post-translationally, dephosphorylated at Ser-549 by the PNUTS-PP1 complex, promoting RNA polymerase II transcription pause-release. As to expression, ubiquitously expressed. Strongly expressed in heart, placenta, skeletal muscle, pancreas and to a lower extent in brain.

It is found in the nucleus. Its subcellular location is the chromosome. Key component of the super elongation complex (SEC), a complex required to increase the catalytic rate of RNA polymerase II transcription by suppressing transient pausing by the polymerase at multiple sites along the DNA. In the SEC complex, AFF4 acts as a central scaffold that recruits other factors through direct interactions with ELL proteins (ELL, ELL2 or ELL3) and the P-TEFb complex. In case of infection by HIV-1 virus, the SEC complex is recruited by the viral Tat protein to stimulate viral gene expression. The protein is AF4/FMR2 family member 4 (AFF4) of Homo sapiens (Human).